The chain runs to 242 residues: Probable transcriptional regulatory protein PG_0097 (242 aa).

It belongs to the TACO1 family.

Its subcellular location is the cytoplasm. This is Probable transcriptional regulatory protein PG_0097 from Porphyromonas gingivalis (strain ATCC BAA-308 / W83).